Consider the following 277-residue polypeptide: RNA-binding protein pno-1 (277 aa).

2 disordered regions span residues 1-52 (MATS…KLVK) and 72-100 (DEDA…GESR). The segment covering 8–27 (FDDELPMEEGMPELLDDEDV) has biased composition (acidic residues). Over residues 30–40 (TLPSLLEQNLD) the composition is skewed to polar residues. A compositionally biased stretch (acidic residues) spans 72 to 81 (DEDATADTAD). A KH domain is found at 198 to 250 (GDHVSRAIGRIAGKDGRTKLVIENTTKTRIVVANTKIHILGAYQNLKLARNAV).

Belongs to the PNO1 family. As to quaternary structure, part of the small subunit (SSU) processome, composed of more than 70 proteins and the RNA chaperone small nucleolar RNA (snoRNA) U3.

The protein localises to the nucleus. The protein resides in the nucleolus. Part of the small subunit (SSU) processome, first precursor of the small eukaryotic ribosomal subunit. During the assembly of the SSU processome in the nucleolus, many ribosome biogenesis factors, an RNA chaperone and ribosomal proteins associate with the nascent pre-rRNA and work in concert to generate RNA folding, modifications, rearrangements and cleavage as well as targeted degradation of pre-ribosomal RNA by the RNA exosome. Positively regulates dimethylation of two adjacent adenosines in the loop of a conserved hairpin near the 3'-end of 18S rRNA. This Caenorhabditis elegans protein is RNA-binding protein pno-1.